A 233-amino-acid chain; its full sequence is Small ribosomal subunit protein uS2c (233 aa).

Belongs to the universal ribosomal protein uS2 family.

It is found in the plastid. The protein localises to the cyanelle. The sequence is that of Small ribosomal subunit protein uS2c (rps2) from Cyanophora paradoxa.